The primary structure comprises 180 residues: Large ribosomal subunit protein uL5 (180 aa).

This sequence belongs to the universal ribosomal protein uL5 family. As to quaternary structure, part of the 50S ribosomal subunit; part of the 5S rRNA/L5/L18/L25 subcomplex. Contacts the 5S rRNA and the P site tRNA. Forms a bridge to the 30S subunit in the 70S ribosome.

Functionally, this is one of the proteins that bind and probably mediate the attachment of the 5S RNA into the large ribosomal subunit, where it forms part of the central protuberance. In the 70S ribosome it contacts protein S13 of the 30S subunit (bridge B1b), connecting the 2 subunits; this bridge is implicated in subunit movement. Contacts the P site tRNA; the 5S rRNA and some of its associated proteins might help stabilize positioning of ribosome-bound tRNAs. This chain is Large ribosomal subunit protein uL5, found in Chlamydia pneumoniae (Chlamydophila pneumoniae).